The primary structure comprises 603 residues: UvrABC system protein C (603 aa).

The 78-residue stretch at 15 to 92 (DQPGCYLMKN…IQKHQPYYNI (78 aa)) folds into the GIY-YIG domain. The UVR domain occupies 197 to 232 (AQVKKQLTARMERAAGQLEFERAAEIRDQLHYIEVT).

The protein belongs to the UvrC family. In terms of assembly, interacts with UvrB in an incision complex.

It is found in the cytoplasm. The UvrABC repair system catalyzes the recognition and processing of DNA lesions. UvrC both incises the 5' and 3' sides of the lesion. The N-terminal half is responsible for the 3' incision and the C-terminal half is responsible for the 5' incision. The chain is UvrABC system protein C from Limosilactobacillus fermentum (strain NBRC 3956 / LMG 18251) (Lactobacillus fermentum).